The primary structure comprises 414 residues: 2,3-diketo-5-methylthiopentyl-1-phosphate enolase (414 aa).

The active-site Proton acceptor is Lys99. Substrate is bound by residues Lys148, 174-177 (KDDE), His265, Gly338, and 360-361 (GG). Positions 174, 176, and 177 each coordinate Mg(2+). Lys174 is modified (N6-carboxylysine).

The protein belongs to the RuBisCO large chain family. Type IV subfamily. In terms of assembly, homodimer. The cofactor is Mg(2+).

It carries out the reaction 5-methylsulfanyl-2,3-dioxopentyl phosphate = 2-hydroxy-5-methylsulfanyl-3-oxopent-1-enyl phosphate. It functions in the pathway amino-acid biosynthesis; L-methionine biosynthesis via salvage pathway; L-methionine from S-methyl-5-thio-alpha-D-ribose 1-phosphate: step 3/6. Catalyzes the enolization of 2,3-diketo-5-methylthiopentyl-1-phosphate (DK-MTP-1-P) into 2-hydroxy-3-keto-5-methylthiopentenyl-1-phosphate (HK-MTPenyl-1-P). The polypeptide is 2,3-diketo-5-methylthiopentyl-1-phosphate enolase (Bacillus cereus (strain ATCC 10987 / NRS 248)).